The following is a 234-amino-acid chain: uncharacterized protein (234 aa).

The next 3 membrane-spanning stretches (helical) occupy residues 32 to 52 (GLRT…VSVL), 62 to 82 (IPAQ…LKEG), and 106 to 126 (QGLF…NIAL).

The protein belongs to the MgtC/SapB family.

Its subcellular location is the cell membrane. This is an uncharacterized protein from Synechocystis sp. (strain ATCC 27184 / PCC 6803 / Kazusa).